We begin with the raw amino-acid sequence, 132 residues long: ATP synthase epsilon chain, chloroplastic (132 aa).

Thr2 is modified (N-acetylthreonine).

Belongs to the ATPase epsilon chain family. In terms of assembly, F-type ATPases have 2 components, CF(1) - the catalytic core - and CF(0) - the membrane proton channel. CF(1) has five subunits: alpha(3), beta(3), gamma(1), delta(1), epsilon(1). CF(0) has three main subunits: a, b and c.

It localises to the plastid. The protein resides in the chloroplast thylakoid membrane. In terms of biological role, produces ATP from ADP in the presence of a proton gradient across the membrane. The polypeptide is ATP synthase epsilon chain, chloroplastic (Arabidopsis thaliana (Mouse-ear cress)).